The primary structure comprises 286 residues: MQIVHTLADLRAALAPVRRSAGTIAFVPTMGNLHEGHLALVRQARERVGAAGTVVASIFVNRLQFAPHEDFDRYPRTLARDAELLAPAGCDLVFAPAEAELYPQPQTFKVQPDPALAELLEGHFRPGFFTGVCTVVMKLFSIVQPQVAVFGKKDYQQLMVLRRMVEQFALPIEVLGGETLRAHDGLALSSRNGYLGAAEREQALQLSAALRDLLGAVRAGGAPLETLEAQACTALRAQGWLPDYLCVRRRTDLLPPGADEIAAGLPLVALGAARLGNTRLIDNLEG.

Position 30–37 (30–37 (MGNLHEGH)) interacts with ATP. Histidine 37 functions as the Proton donor in the catalytic mechanism. Glutamine 64 is a binding site for (R)-pantoate. Residue glutamine 64 coordinates beta-alanine. Residue 151-154 (GKKD) participates in ATP binding. Glutamine 157 is a binding site for (R)-pantoate. Residues leucine 180 and 188-191 (LSSR) each bind ATP.

Belongs to the pantothenate synthetase family. As to quaternary structure, homodimer.

It localises to the cytoplasm. It catalyses the reaction (R)-pantoate + beta-alanine + ATP = (R)-pantothenate + AMP + diphosphate + H(+). The protein operates within cofactor biosynthesis; (R)-pantothenate biosynthesis; (R)-pantothenate from (R)-pantoate and beta-alanine: step 1/1. In terms of biological role, catalyzes the condensation of pantoate with beta-alanine in an ATP-dependent reaction via a pantoyl-adenylate intermediate. This Leptothrix cholodnii (strain ATCC 51168 / LMG 8142 / SP-6) (Leptothrix discophora (strain SP-6)) protein is Pantothenate synthetase.